A 559-amino-acid polypeptide reads, in one-letter code: uncharacterized protein (559 aa).

Disordered stretches follow at residues 315–360 (TDDA…ERDI) and 454–559 (DKID…STEN). Polar residues predominate over residues 320–329 (NENSDNSMNT). Residues 348-357 (DNNDDSDDSE) are compositionally biased toward acidic residues. The stretch at 433–495 (ELKIQEMEKI…KRRQKRSQRS (63 aa)) forms a coiled coil. Residues 454–501 (DKIDMDQIKSEMSRRRDESNKRRDEKRKDREEKRRQKRSQRSDTRKQG) are compositionally biased toward basic and acidic residues. Residues 507-527 (SDEATSDQTQSTDSNNTTQTA) show a composition bias toward low complexity.

Its subcellular location is the virion. This is an uncharacterized protein from Acanthamoeba polyphaga mimivirus (APMV).